The following is a 186-amino-acid chain: Small ribosomal subunit protein uS19 (186 aa).

Positions 1–95 (MREAIKRYGS…YEELYAQYKQ (95 aa)) are unknown. The segment at 96 to 186 (MTEKKAYVDP…EKTAKVVKKK (91 aa)) is small ribosomal subunit protein uS19.

This sequence belongs to the universal ribosomal protein uS19 family.

In terms of biological role, protein S19 forms a complex with S13 that binds strongly to the 16S ribosomal RNA. This is Small ribosomal subunit protein uS19 from Aquifex aeolicus (strain VF5).